The primary structure comprises 104 residues: Complex III assembly factor LYRM7 (104 aa).

Ser-60 carries the post-translational modification Phosphoserine.

The protein belongs to the complex I LYR family. In terms of assembly, interacts with UQCRFS1.

The protein resides in the mitochondrion matrix. Functionally, assembly factor required for Rieske Fe-S protein UQCRFS1 incorporation into the cytochrome b-c1 (CIII) complex. Functions as a chaperone, binding to this subunit within the mitochondrial matrix and stabilizing it prior to its translocation and insertion into the late CIII dimeric intermediate within the mitochondrial inner membrane. This chain is Complex III assembly factor LYRM7 (LYRM7), found in Bos taurus (Bovine).